A 407-amino-acid polypeptide reads, in one-letter code: Digeranylgeranylglycerophospholipid reductase (407 aa).

The FAD site is built by A15, E34, C45, A46, G48, R99, A123, D281, G293, and I294.

The protein belongs to the geranylgeranyl reductase family. DGGGPL reductase subfamily. It depends on FAD as a cofactor.

The enzyme catalyses a 2,3-bis-O-phytanyl-sn-glycerol 1-phospholipid + 8 oxidized 2[4Fe-4S]-[ferredoxin] = a 2,3-bis-O-(geranylgeranyl)-sn-glycerol 1-phospholipid + 8 reduced 2[4Fe-4S]-[ferredoxin] + 16 H(+). It catalyses the reaction 2,3-bis-O-(phytanyl)-sn-glycerol 1-phosphate + 8 oxidized 2[4Fe-4S]-[ferredoxin] = 2,3-bis-O-(geranylgeranyl)-sn-glycerol 1-phosphate + 8 reduced 2[4Fe-4S]-[ferredoxin] + 16 H(+). The catalysed reaction is a 2,3-bis-O-phytanyl-sn-glycerol 1-phospholipid + 8 A = a 2,3-bis-O-(geranylgeranyl)-sn-glycerol 1-phospholipid + 8 AH2. It carries out the reaction CDP-2,3-bis-O-(geranylgeranyl)-sn-glycerol + 8 AH2 = CDP-2,3-bis-O-(phytanyl)-sn-glycerol + 8 A. The enzyme catalyses archaetidylserine + 8 AH2 = 2,3-bis-O-phytanyl-sn-glycero-3-phospho-L-serine + 8 A. The protein operates within membrane lipid metabolism; glycerophospholipid metabolism. In terms of biological role, is involved in the reduction of 2,3-digeranylgeranylglycerophospholipids (unsaturated archaeols) into 2,3-diphytanylglycerophospholipids (saturated archaeols) in the biosynthesis of archaeal membrane lipids. Catalyzes the formation of archaetidic acid (2,3-di-O-phytanyl-sn-glyceryl phosphate) from 2,3-di-O-geranylgeranylglyceryl phosphate (DGGGP) via the hydrogenation of each double bond of the isoprenoid chains. Is also probably able to reduce double bonds of geranyl groups in CDP-2,3-bis-O-(geranylgeranyl)-sn-glycerol and archaetidylserine, thus acting at various stages in the biosynthesis of archaeal membrane lipids. In Methanosarcina mazei (strain ATCC BAA-159 / DSM 3647 / Goe1 / Go1 / JCM 11833 / OCM 88) (Methanosarcina frisia), this protein is Digeranylgeranylglycerophospholipid reductase.